A 251-amino-acid chain; its full sequence is Flap endonuclease Xni (251 aa).

Mg(2+) is bound at residue Asp-104. The 5'-3' exonuclease domain maps to 160 to 249; the sequence is VLPRQLPDYW…IDGNLQQLRL (90 aa). Residues Leu-171, Ala-172, Pro-180, Val-182, and Ile-185 each coordinate K(+). Residues 184–189 are interaction with DNA; sequence GIGPKS.

This sequence belongs to the Xni family. Mg(2+) serves as cofactor. It depends on K(+) as a cofactor.

Has flap endonuclease activity. During DNA replication, flap endonucleases cleave the 5'-overhanging flap structure that is generated by displacement synthesis when DNA polymerase encounters the 5'-end of a downstream Okazaki fragment. The sequence is that of Flap endonuclease Xni from Salmonella typhimurium (strain LT2 / SGSC1412 / ATCC 700720).